A 483-amino-acid polypeptide reads, in one-letter code: MLTLDTLNTMLAVSEEGMVEEMILALLASPQLVIFFEKFPRLKNAVTADLPRWREALRSRLKDARVPPELTEEVMCYQQSQLLSTPQFIVQLPQILALLHRLHSPYAAQAKQLTESNSTFTPALHTLFLQRWRLSLVVQATTLNQQLLEEEREQLLSDVQERMTLSGQLEPTLAENDNAAGRLWDMSAGQLKRGDYQLIVKYGEFLAAQPELMQLAEQLGRSREAKSVPKKDAPMETFRTLVREPATVPEQVDGIQQGDDILRLLPPELATLGITELEYEFYRRLVEKQLLTYRLHGEAWREKVTERPVVHQDVDEQPRGPFIVCVDTSGSMGGFNEQCAKAFCLALMRVALADNRRCFIMLFSTDVVRYELSGPESIEQAIRFLSQRFRGGTDIASCFRAIIERMQGREWFDADAVVISDFIAQRLPDDVVSKVGELQRLHQHRFHAVAMSAHGKPGIMRIFDHIWRFDTGMRSRLLRRWRR.

The protein belongs to the ViaA family. In terms of assembly, homodimer. Interacts with RavA.

It localises to the cytoplasm. Component of the RavA-ViaA chaperone complex, which may act on the membrane to optimize the function of some of the respiratory chains. ViaA stimulates the ATPase activity of RavA. The chain is Regulatory protein ViaA from Salmonella typhi.